The primary structure comprises 25 residues: Superoxide dismutase [Mn], mitochondrial (25 aa).

A Mn(2+)-binding site is contributed by His9.

The protein belongs to the iron/manganese superoxide dismutase family. In terms of assembly, homotetramer. Mn(2+) serves as cofactor.

The protein resides in the mitochondrion matrix. The enzyme catalyses 2 superoxide + 2 H(+) = H2O2 + O2. Functionally, destroys superoxide anion radicals which are normally produced within the cells and which are toxic to biological systems. The sequence is that of Superoxide dismutase [Mn], mitochondrial from Alternaria alternata (Alternaria rot fungus).